We begin with the raw amino-acid sequence, 347 residues long: Selenide, water dikinase (347 aa).

Cysteine 16 is an active-site residue. ATP is bound by residues lysine 19 and 47–49 (TRD). Aspartate 50 serves as a coordination point for Mg(2+). ATP contacts are provided by residues aspartate 67, aspartate 90, and 138–140 (GHS). Aspartate 90 is a Mg(2+) binding site. Residue aspartate 226 coordinates Mg(2+).

It belongs to the selenophosphate synthase 1 family. Class I subfamily. Homodimer. Mg(2+) is required as a cofactor.

It carries out the reaction hydrogenselenide + ATP + H2O = selenophosphate + AMP + phosphate + 2 H(+). Its function is as follows. Synthesizes selenophosphate from selenide and ATP. The polypeptide is Selenide, water dikinase (Photorhabdus laumondii subsp. laumondii (strain DSM 15139 / CIP 105565 / TT01) (Photorhabdus luminescens subsp. laumondii)).